Here is a 190-residue protein sequence, read N- to C-terminus: Elongation factor P-like protein (190 aa).

This sequence belongs to the elongation factor P family.

This is Elongation factor P-like protein from Cronobacter sakazakii (strain ATCC BAA-894) (Enterobacter sakazakii).